Consider the following 349-residue polypeptide: 4-hydroxy-2-oxovalerate aldolase 1 (349 aa).

Residues 9–261 (ITVHDMTLRD…ATGVDVFRIQ (253 aa)) enclose the Pyruvate carboxyltransferase domain. 17-18 (RD) contributes to the substrate binding site. A Mn(2+)-binding site is contributed by D18. H21 acts as the Proton acceptor in catalysis. 2 residues coordinate substrate: S171 and H200. Residues H200 and H202 each coordinate Mn(2+). Position 291 (Y291) interacts with substrate.

It belongs to the 4-hydroxy-2-oxovalerate aldolase family.

It carries out the reaction (S)-4-hydroxy-2-oxopentanoate = acetaldehyde + pyruvate. The polypeptide is 4-hydroxy-2-oxovalerate aldolase 1 (Methylibium petroleiphilum (strain ATCC BAA-1232 / LMG 22953 / PM1)).